The primary structure comprises 395 residues: 8-amino-7-oxononanoate synthase (395 aa).

Arg-24 is a binding site for substrate. 111–112 (GF) serves as a coordination point for pyridoxal 5'-phosphate. His-136 is a binding site for substrate. Pyridoxal 5'-phosphate-binding positions include Ser-184, 209–212 (DDAH), and 240–243 (TLSK). Lys-243 is subject to N6-(pyridoxal phosphate)lysine. Residue Thr-357 coordinates substrate.

This sequence belongs to the class-II pyridoxal-phosphate-dependent aminotransferase family. BioF subfamily. Homodimer. Pyridoxal 5'-phosphate is required as a cofactor.

It carries out the reaction 6-carboxyhexanoyl-[ACP] + L-alanine + H(+) = (8S)-8-amino-7-oxononanoate + holo-[ACP] + CO2. The protein operates within cofactor biosynthesis; biotin biosynthesis. Its function is as follows. Catalyzes the decarboxylative condensation of pimeloyl-[acyl-carrier protein] and L-alanine to produce 8-amino-7-oxononanoate (AON), [acyl-carrier protein], and carbon dioxide. In Alkaliphilus metalliredigens (strain QYMF), this protein is 8-amino-7-oxononanoate synthase.